A 309-amino-acid polypeptide reads, in one-letter code: Protein FdhE (309 aa).

Belongs to the FdhE family.

The protein resides in the cytoplasm. Its function is as follows. Necessary for formate dehydrogenase activity. The sequence is that of Protein FdhE from Shigella boydii serotype 18 (strain CDC 3083-94 / BS512).